A 151-amino-acid polypeptide reads, in one-letter code: Nucleoside diphosphate kinase (151 aa).

Residues K11, F59, R87, T93, R104, and N114 each contribute to the ATP site. The Pros-phosphohistidine intermediate role is filled by H117.

The protein belongs to the NDK family. Homohexamer. It depends on Mg(2+) as a cofactor.

The catalysed reaction is a 2'-deoxyribonucleoside 5'-diphosphate + ATP = a 2'-deoxyribonucleoside 5'-triphosphate + ADP. It carries out the reaction a ribonucleoside 5'-diphosphate + ATP = a ribonucleoside 5'-triphosphate + ADP. Functionally, major role in the synthesis of nucleoside triphosphates other than ATP. The ATP gamma phosphate is transferred to the NDP beta phosphate via a ping-pong mechanism, using a phosphorylated active-site intermediate. This chain is Nucleoside diphosphate kinase, found in Ginglymostoma cirratum (Nurse shark).